Reading from the N-terminus, the 500-residue chain is Cytochrome P450 71B9 (500 aa).

A helical transmembrane segment spans residues 1–21 (MATIWFLSLLFLCCILLAAFK). Cysteine 440 contacts heme.

This sequence belongs to the cytochrome P450 family. The cofactor is heme.

The protein localises to the membrane. This is Cytochrome P450 71B9 (CYP71B9) from Arabidopsis thaliana (Mouse-ear cress).